Here is a 240-residue protein sequence, read N- to C-terminus: Enoyl-CoA delta isomerase 2, peroxisomal (240 aa).

The short motif at 238–240 (PKL) is the Microbody targeting signal element.

This sequence belongs to the enoyl-CoA hydratase/isomerase family.

It localises to the peroxisome. It catalyses the reaction a (3Z)-enoyl-CoA = a 4-saturated (2E)-enoyl-CoA. The enzyme catalyses a (3E)-enoyl-CoA = a 4-saturated (2E)-enoyl-CoA. It functions in the pathway lipid metabolism; fatty acid beta-oxidation. In terms of biological role, able to isomerize both 3-cis and 3-trans double bonds into the 2-trans form in a range of enoyl-CoA species. Essential for the beta oxidation of unsaturated fatty acids. Involved with IBR1 and IBR3 in the peroxisomal beta-oxidation of indole-3-butyric acid (IBA) to form indole-3-acetic acid (IAA), a biologically active auxin. This Arabidopsis thaliana (Mouse-ear cress) protein is Enoyl-CoA delta isomerase 2, peroxisomal.